Reading from the N-terminus, the 503-residue chain is MDKITGFSDDELLVKILSFLPTKAAVTTSILSKQWKFLWMRLPKLEYHDDIKIYILYMRGGSRSRTDSILLEKSQRMWRFIDKNLPLHSSPVIESLRLTIYNELFQPESINLWVEIAVSRCVKELSVRFSPFKGKRDALLPTTLYTCKSLVTLKLRENILVDVPHVFCLPSLKTLHLSHVTYADEESLQRLLSNCFVLEDLVVERRVGDNVRNFAVIIPSLLSLSFEILGQCSSEEYVIHTPSLKYFKARDFGECSTCLILNMPKLEEVFVSTAGHNIKKLLESVTYVKRLSLFIPDNNAEAFTALYGDVIVFNQLEHLTFIIWEAYCSKLLYWLLIASPKLRNLEFNDQFSSDGMDTLVFWEQMITSVPQCLLSSLQTFKWLGNGDSIEGKDLATFILRNSCQLKTATISIGQGQNKLEIEKELLLHQNMDKISGISDDVLLVKILSFRPTKVAVSTSVLSKQWKYLRKRVLKLEYDDTECKTKPSKSSHKRFRCFVKRFCK.

Residues 2 to 50 enclose the F-box domain; that stretch reads DKITGFSDDELLVKILSFLPTKAAVTTSILSKQWKFLWMRLPKLEYHDD. The region spanning 361–412 is the FBD domain; the sequence is FWEQMITSVPQCLLSSLQTFKWLGNGDSIEGKDLATFILRNSCQLKTATISI.

This chain is Putative FBD-associated F-box protein At5g56410, found in Arabidopsis thaliana (Mouse-ear cress).